Here is a 609-residue protein sequence, read N- to C-terminus: UvrABC system protein C (609 aa).

In terms of domain architecture, GIY-YIG spans 15–92; sequence TGSGVYQMQD…IKQFRPRYNV (78 aa). The 36-residue stretch at 202–237 folds into the UVR domain; it reads DQVIIKLTERMEVASENLVFEEAAHYRDQIRQLRRL.

Belongs to the UvrC family. As to quaternary structure, interacts with UvrB in an incision complex.

It localises to the cytoplasm. Functionally, the UvrABC repair system catalyzes the recognition and processing of DNA lesions. UvrC both incises the 5' and 3' sides of the lesion. The N-terminal half is responsible for the 3' incision and the C-terminal half is responsible for the 5' incision. The sequence is that of UvrABC system protein C from Coxiella burnetii (strain CbuK_Q154) (Coxiella burnetii (strain Q154)).